Reading from the N-terminus, the 292-residue chain is Acetyl-coenzyme A carboxylase carboxyl transferase subunit beta (292 aa).

A CoA carboxyltransferase N-terminal domain is found at 29 to 292 (LWSKCPECGQ…HGCESRVASS (264 aa)). Zn(2+) is bound by residues Cys-33, Cys-36, Cys-52, and Cys-55. The C4-type zinc-finger motif lies at 33–55 (CPECGQVVYRKDLLSNASVCGNC).

This sequence belongs to the AccD/PCCB family. As to quaternary structure, acetyl-CoA carboxylase is a heterohexamer composed of biotin carboxyl carrier protein (AccB), biotin carboxylase (AccC) and two subunits each of ACCase subunit alpha (AccA) and ACCase subunit beta (AccD). It depends on Zn(2+) as a cofactor.

It is found in the cytoplasm. The enzyme catalyses N(6)-carboxybiotinyl-L-lysyl-[protein] + acetyl-CoA = N(6)-biotinyl-L-lysyl-[protein] + malonyl-CoA. The protein operates within lipid metabolism; malonyl-CoA biosynthesis; malonyl-CoA from acetyl-CoA: step 1/1. Functionally, component of the acetyl coenzyme A carboxylase (ACC) complex. Biotin carboxylase (BC) catalyzes the carboxylation of biotin on its carrier protein (BCCP) and then the CO(2) group is transferred by the transcarboxylase to acetyl-CoA to form malonyl-CoA. This chain is Acetyl-coenzyme A carboxylase carboxyl transferase subunit beta, found in Synechococcus sp. (strain CC9311).